We begin with the raw amino-acid sequence, 729 residues long: Alpha-galactosidase AgaA (729 aa).

Substrate is bound by residues Asp-53, Trp-199, 366–367 (DD), Arg-443, 476–480 (KWDMN), Cys-526, and Asp-548. The Nucleophile role is filled by Asp-478. Asp-548 (proton donor) is an active-site residue.

Belongs to the glycosyl hydrolase 36 family. As to quaternary structure, homotetramer.

The catalysed reaction is Hydrolysis of terminal, non-reducing alpha-D-galactose residues in alpha-D-galactosides, including galactose oligosaccharides, galactomannans and galactolipids.. Its activity is regulated as follows. Not inhibited by D-galactose or sucrose. Inhibited by pharmaceutical drug 1-deoxygalactonojirimycin. Functionally, hydrolyzes the short-chain alpha-galactosaccharides raffinose and stachyose. The polypeptide is Alpha-galactosidase AgaA (Geobacillus stearothermophilus (Bacillus stearothermophilus)).